The sequence spans 381 residues: MTGVISSSSIGEKINEWYMYIRRFSIPDAEYLRREIKQELDQMEEDQDLHLYYSLMEFRHNLMLEYLEPLEKMRIEEQPRLSDLLLEIDKKQARLTGLLEYYFNFFRGMYELDQREYLSAIKFFKKAESKLIFVKDRIEKAEFFFKMSESYYYMKQTYFSMDYARQAYEIYKEHEAYNIRLLQCHSLFATNFLDLKQYEDAISHFQKAYSMAEAEKQPQLMGRTLYNIGLCKNSQSQYEDAIPYFKRAIAVFEESNILPSLPQAYFLITQIHYKLGKIDKAHEYHSKGMAYSQKAGDVIYLSEFEFLKSLYLSGPDEEAIQGFFDFLESKMLYADLEDFAIDVAKYYHERKNFQKASAYFLKVEQVRQLIQGGVSLYEIEV.

Mn(2+) is bound by residues Leu-40, Met-43, and Glu-45. 6 TPR repeats span residues 101–137 (YYFN…VKDR), 148–181 (SESY…NIRL), 182–215 (LQCH…AEAE), 222–255 (GRTL…FEES), 262–295 (PQAY…SQKA), and 337–370 (EDFA…RQLI).

This sequence belongs to the Rap family. As to quaternary structure, monomer. Is monomeric either alone or in complex with PhrF. Interacts specifically with the C-terminal DNA-binding domain of ComA. Interacts with PhrF.

The protein resides in the cytoplasm. Its activity is regulated as follows. Inhibited by PhrF, which prevents RapF-ComA interaction. Interaction with PhrF induces a conformational change in RapF, which is propagated to the ComA binding site and causes the dissociation of ComA from RapF. Involved in the regulation of genetic competence development. Inhibits the activity of ComA, a transcriptional factor that regulates the development of genetic competence. Acts by binding to ComA, leading to the inhibition of its DNA-binding activity. May also affect transcription independently of ComA. The polypeptide is Regulatory protein RapF (rapF) (Bacillus subtilis (strain 168)).